A 318-amino-acid chain; its full sequence is Transaldolase (318 aa).

The active-site Schiff-base intermediate with substrate is Lys-126.

Belongs to the transaldolase family. Type 1 subfamily. In terms of assembly, homodimer.

It is found in the cytoplasm. The catalysed reaction is D-sedoheptulose 7-phosphate + D-glyceraldehyde 3-phosphate = D-erythrose 4-phosphate + beta-D-fructose 6-phosphate. It functions in the pathway carbohydrate degradation; pentose phosphate pathway; D-glyceraldehyde 3-phosphate and beta-D-fructose 6-phosphate from D-ribose 5-phosphate and D-xylulose 5-phosphate (non-oxidative stage): step 2/3. Its function is as follows. Transaldolase is important for the balance of metabolites in the pentose-phosphate pathway. This chain is Transaldolase, found in Cupriavidus necator (strain ATCC 17699 / DSM 428 / KCTC 22496 / NCIMB 10442 / H16 / Stanier 337) (Ralstonia eutropha).